The chain runs to 62 residues: Zinc metalloproteinase-disintegrin-like BaG (62 aa).

The 31-residue stretch at 24–54 folds into the Peptidase M12B domain; the sequence is KTDLLNRSHDNAQLSPINLVVAVIMAHEMGH. N-linked (GlcNAc...) asparagine glycosylation is present at N29. Zn(2+) is bound at residue H50. The active site involves E51. Zn(2+) is bound at residue H54.

It belongs to the venom metalloproteinase (M12B) family. P-III subfamily. P-IIIc sub-subfamily. Dimer. Requires Zn(2+) as cofactor. In terms of processing, the N-terminus is blocked. In terms of tissue distribution, expressed by the venom gland.

Its subcellular location is the secreted. Inhibited by EDTA, and 1,10-phenanthroline. In terms of biological role, snake venom Zinc metalloproteinase that inhibits ADP-induced platelet aggregation and inhibits the alpha-5/beta-1 (ITGA5/ITGB1) integrin, a fibronectin receptor. Has caseinolytic activity. Induces the detachment of cells that are bound to fibronectin. The protein is Zinc metalloproteinase-disintegrin-like BaG of Bothrops alternatus (Urutu).